A 101-amino-acid polypeptide reads, in one-letter code: Protein SPIRAL1-like 3 (101 aa).

Over residues 1 to 22 (MGRGVSSGGGQSSLGYLFGGGE) the composition is skewed to gly residues. 2 disordered regions span residues 1–54 (MGRG…GIQS) and 73–101 (TDRP…KDGK).

Belongs to the SPIRAL1 family.

Functionally, acts in maintaining the cortical microtubules organization essential for anisotropic cell growth. This Oryza sativa subsp. japonica (Rice) protein is Protein SPIRAL1-like 3.